A 498-amino-acid polypeptide reads, in one-letter code: Glycerol kinase (498 aa).

Residue T12 coordinates ADP. Positions 12, 13, and 14 each coordinate ATP. T12 is a binding site for sn-glycerol 3-phosphate. R16 provides a ligand contact to ADP. Residues R82, E83, Y134, and D243 each contribute to the sn-glycerol 3-phosphate site. R82, E83, Y134, D243, and Q244 together coordinate glycerol. Positions 265 and 308 each coordinate ADP. Positions 265, 308, 312, and 409 each coordinate ATP. Positions 409 and 413 each coordinate ADP.

This sequence belongs to the FGGY kinase family. In terms of assembly, homotetramer and homodimer (in equilibrium).

The catalysed reaction is glycerol + ATP = sn-glycerol 3-phosphate + ADP + H(+). It participates in polyol metabolism; glycerol degradation via glycerol kinase pathway; sn-glycerol 3-phosphate from glycerol: step 1/1. With respect to regulation, activated by phosphorylation and inhibited by fructose 1,6-bisphosphate (FBP). Functionally, key enzyme in the regulation of glycerol uptake and metabolism. Catalyzes the phosphorylation of glycerol to yield sn-glycerol 3-phosphate. The chain is Glycerol kinase from Clostridium botulinum (strain Langeland / NCTC 10281 / Type F).